Reading from the N-terminus, the 148-residue chain is Lysozyme-like protein 6 (148 aa).

The signal sequence occupies residues 1–19 (MLKALFICVASCLLVVNDG). The C-type lysozyme domain occupies 20 to 148 (NIIHRCSLAK…SYWMTGCHLG (129 aa)). Cystine bridges form between Cys25–Cys145, Cys49–Cys133, Cys83–Cys98, and Cys94–Cys112. Glu54 is a catalytic residue. An N-linked (GlcNAc...) asparagine glycan is attached at Asn58. Residue Asp71 is part of the active site.

It belongs to the glycosyl hydrolase 22 family. In terms of assembly, monomer. Expressed strongly in testis and epididymis and weakly in seminal vesicle, vas deferens, kidney and spleen. Highly expressed in primary spermatocytes and round spermatids (at protein level).

Its subcellular location is the secreted. The protein localises to the cell surface. The protein resides in the cell projection. It localises to the cilium. It is found in the flagellum. It carries out the reaction Hydrolysis of (1-&gt;4)-beta-linkages between N-acetylmuramic acid and N-acetyl-D-glucosamine residues in a peptidoglycan and between N-acetyl-D-glucosamine residues in chitodextrins.. Its function is as follows. May be involved sperm-egg plasma membrane adhesion and fusion during fertilization. Exhibits bacteriolytic activity in vitro against Micrococcus luteus and Staphylococcus aureus. Shows weak bacteriolytic activity against Gram-positive bacteria at physiological pH. Bacteriolytic activity is pH-dependent, with a maximum at around pH 5.6. The sequence is that of Lysozyme-like protein 6 (Lyzl6) from Mus musculus (Mouse).